The chain runs to 81 residues: Cytochrome b559 subunit alpha (81 aa).

A helical membrane pass occupies residues 22–36; it reads VIHSITIPSLFIAGW. Residue H24 participates in heme binding.

The protein belongs to the PsbE/PsbF family. Heterodimer of an alpha subunit and a beta subunit. PSII is composed of 1 copy each of membrane proteins PsbA, PsbB, PsbC, PsbD, PsbE, PsbF, PsbH, PsbI, PsbJ, PsbK, PsbL, PsbM, PsbT, PsbX, PsbY, PsbZ, Psb30/Ycf12, at least 3 peripheral proteins of the oxygen-evolving complex and a large number of cofactors. It forms dimeric complexes. Heme b serves as cofactor.

The protein resides in the plastid. Its subcellular location is the chloroplast thylakoid membrane. Functionally, this b-type cytochrome is tightly associated with the reaction center of photosystem II (PSII). PSII is a light-driven water:plastoquinone oxidoreductase that uses light energy to abstract electrons from H(2)O, generating O(2) and a proton gradient subsequently used for ATP formation. It consists of a core antenna complex that captures photons, and an electron transfer chain that converts photonic excitation into a charge separation. The protein is Cytochrome b559 subunit alpha of Cyanidioschyzon merolae (strain NIES-3377 / 10D) (Unicellular red alga).